Reading from the N-terminus, the 173-residue chain is Translation initiation factor IF-3 (173 aa).

This sequence belongs to the IF-3 family. As to quaternary structure, monomer.

The protein localises to the cytoplasm. In terms of biological role, IF-3 binds to the 30S ribosomal subunit and shifts the equilibrium between 70S ribosomes and their 50S and 30S subunits in favor of the free subunits, thus enhancing the availability of 30S subunits on which protein synthesis initiation begins. In Bartonella bacilliformis (strain ATCC 35685 / KC583 / Herrer 020/F12,63), this protein is Translation initiation factor IF-3.